The primary structure comprises 199 residues: Protein ZNRD2 (199 aa).

Ala2 carries the post-translational modification N-acetylalanine. Residues Cys53, Cys56, Cys70, and Cys73 each contribute to the Zn(2+) site. A disordered region spans residues Leu93 to Asp148. Ser94 is subject to Phosphoserine. Positions Gly127 to Ala137 are enriched in low complexity. A Nuclear export signal motif is present at residues Ser173–Leu194.

As to quaternary structure, homodimer. It depends on Zn(2+) as a cofactor. Expressed in the early postnatal brain.

The protein localises to the cytoplasm. Might play a role in mitosis. Could be a centromere-associated protein. Antigenic molecule. May induce anti-centromere antibodies. The polypeptide is Protein ZNRD2 (Znrd2) (Mus musculus (Mouse)).